Consider the following 429-residue polypeptide: Putative zinc metalloprotease aq_1964 (429 aa).

A Zn(2+)-binding site is contributed by H17. The active site involves E18. H21 is a binding site for Zn(2+). Residues 88–110 (ILIALGGPLFNFLFTILVFALVY) form a helical membrane-spanning segment. In terms of domain architecture, PDZ spans 189–265 (TIKVPNVQKG…AIKLKILRNG (77 aa)). Helical transmembrane passes span 369 to 391 (IFNL…IEWL) and 406 to 428 (RVGL…LRLL).

The protein belongs to the peptidase M50B family. The cofactor is Zn(2+).

The protein resides in the cell inner membrane. The chain is Putative zinc metalloprotease aq_1964 from Aquifex aeolicus (strain VF5).